Consider the following 493-residue polypeptide: uncharacterized protein (493 aa).

Residues 10 to 30 (LVPSTRFALSLVMFFGCLVTY) form a helical membrane-spanning segment. Asn-35, Asn-47, and Asn-69 each carry an N-linked (GlcNAc...) asparagine glycan. The next 6 helical transmembrane spans lie at 85–105 (MVLS…GHLA), 112–132 (RVVF…PVAA), 144–164 (AAIG…WSVW), 175–195 (GVTY…SGFL), 205–225 (PSIF…WWYV), and 272–292 (AVWA…TMLV). N-linked (GlcNAc...) asparagine glycosylation occurs at Asn-305. Transmembrane regions (helical) follow at residues 311–331 (AVAS…GVLA), 348–368 (AAML…GYCG), 375–395 (VIIF…GFVV), and 406–426 (GTVM…SPAV). Asn-433 is a glycosylation site (N-linked (GlcNAc...) asparagine). A helical transmembrane segment spans residues 441–461 (MVLWLTAGILTIGALLFSIFA).

It belongs to the major facilitator superfamily. Sodium/anion cotransporter family.

It is found in the membrane. This is an uncharacterized protein from Caenorhabditis elegans.